Reading from the N-terminus, the 124-residue chain is Protein RibT (124 aa).

In terms of domain architecture, N-acetyltransferase spans 3 to 124 (IRYKKSFEKI…QQDQDISYNN (122 aa)).

Functionally, involved in riboflavin biosynthesis. This is Protein RibT (ribT) from Bacillus subtilis (strain 168).